The following is a 530-amino-acid chain: T-box transcription factor TBX21 (530 aa).

The tract at residues 1-55 (MGIVEPGCGDMLTGTEPMPSDEGRGPGADQQHRFFYPEPGAQDPTDRRAGSSLGT) is disordered. A Phosphoserine modification is found at S52. T55 carries the phosphothreonine modification. Phosphotyrosine occurs at positions 76 and 117. The T-box DNA-binding region spans 140-325 (LSNHLLWSKF…NNPFAKGFRE (186 aa)). The residue at position 219 (Y219) is a Phosphotyrosine; by ABL1. S224 is subject to Phosphoserine. Y265 bears the Phosphotyrosine; by ABL1 mark. T302 is subject to Phosphothreonine. Position 304 is a phosphotyrosine; by ABL1 (Y304). A Glycyl lysine isopeptide (Lys-Gly) (interchain with G-Cter in ubiquitin) cross-link involves residue K313. Positions 444 to 530 (AGWFRPMRTL…EGQFYNYFPN (87 aa)) are disordered. Positions 462 to 482 (SEEQGSSPSLWPEVTSLQPEP) are enriched in polar residues. Low complexity predominate over residues 498 to 515 (SPYPSSGDSSSPAGAPSP). Position 508 is a phosphoserine (S508). Y525 bears the Phosphotyrosine; by ITK mark.

As to quaternary structure, interacts with RUNX1 and RUNX3. Interacts with ITK. The phosphorylated form (at Tyr-525) interacts with GATA3. Interacts with ABL1. Interacts with RELA. The phosphorylated form (at Thr-302) interacts with NFATC2. Interacts with KDM6B. Interacts with SMARCA4 in a KDM6B-dependent manner. Interacts with CCTN1 and CDK9. Interacts with USP10. Phosphorylations at Ser-52, Tyr-76, Ser-224 and Ser-508 are regulated by mTORC1. Phosphorylation at Tyr-525 is essential for its interaction GATA3. Phosphorylation at Tyr-219, Tyr-265 and Tyr-304 enhances its transcriptional activator activity. Phosphorylation at Thr-302 is required for its interaction with NFATC2. In terms of processing, ubiquitinated at Lys-313, leading to its degradation by the proteasome. Ubiquitination is essential for controlling protein stability, binding to the T-box-binding element of the IFN-gamma promoter, and for interaction with NFATC2 through induction of phosphorylation at Thr-302. Deubiquitinated by USP10 leading to its stabilization. T-cell specific. Expressed in regulatory T (TReg) cells.

The protein resides in the nucleus. Functionally, lineage-defining transcription factor which initiates Th1 lineage development from naive Th precursor cells both by activating Th1 genetic programs and by repressing the opposing Th2 and Th17 genetic programs. Activates transcription of a set of genes important for Th1 cell function, including those encoding IFN-gamma and the chemokine receptor CXCR3. Activates IFNG and CXCR3 genes in part by recruiting chromatin remodeling complexes including KDM6B, a SMARCA4-containing SWI/SNF-complex, and an H3K4me2-methyltransferase complex to their promoters and all of these complexes serve to establish a more permissive chromatin state conducive with transcriptional activation. Can activate Th1 genes also via recruitment of Mediator complex and P-TEFb (composed of CDK9 and CCNT1/cyclin-T1) in the form of the super elongation complex (SEC) to super-enhancers and associated genes in activated Th1 cells. Inhibits the Th17 cell lineage commitment by blocking RUNX1-mediated transactivation of Th17 cell-specific transcriptinal regulator RORC. Inhibits the Th2 cell lineage commitment by suppressing the production of Th2 cytokines, such as IL-4, IL-5, and IL- 13, via repression of transcriptional regulators GATA3 and NFATC2. Protects Th1 cells from amplifying aberrant type-I IFN response in an IFN-gamma abundant microenvironment by acting as a repressor of type-I IFN transcription factors and type-I IFN- stimulated genes. Acts as a regulator of antiviral B-cell responses; controls chronic viral infection by promoting the antiviral antibody IgG2a isotype switching and via regulation of a broad antiviral gene expression program. In Mus musculus (Mouse), this protein is T-box transcription factor TBX21 (Tbx21).